Here is a 118-residue protein sequence, read N- to C-terminus: Large ribosomal subunit protein bL20 (118 aa).

The protein belongs to the bacterial ribosomal protein bL20 family.

Functionally, binds directly to 23S ribosomal RNA and is necessary for the in vitro assembly process of the 50S ribosomal subunit. It is not involved in the protein synthesizing functions of that subunit. The sequence is that of Large ribosomal subunit protein bL20 from Staphylococcus carnosus (strain TM300).